A 460-amino-acid polypeptide reads, in one-letter code: Chromosomal replication initiator protein DnaA (460 aa).

Residues 1–84 (MAVSLWQQCI…RFDIGSRPSA (84 aa)) are domain I, interacts with DnaA modulators. The segment at 84-123 (AKKPEPAPVAAVRVPNPQTKASVGTSFNTTEPVANANHRS) is domain II. Residues 124-340 (NINPTYQFDN…GALNRVIANA (217 aa)) are domain III, AAA+ region. ATP contacts are provided by Gly-168, Gly-170, Lys-171, and Thr-172. The segment at 341-460 (NFTGRPITID…YANLIRTLSS (120 aa)) is domain IV, binds dsDNA.

The protein belongs to the DnaA family. Oligomerizes as a right-handed, spiral filament on DNA at oriC.

The protein resides in the cytoplasm. Its function is as follows. Plays an essential role in the initiation and regulation of chromosomal replication. ATP-DnaA binds to the origin of replication (oriC) to initiate formation of the DNA replication initiation complex once per cell cycle. Binds the DnaA box (a 9 base pair repeat at the origin) and separates the double-stranded (ds)DNA. Forms a right-handed helical filament on oriC DNA; dsDNA binds to the exterior of the filament while single-stranded (ss)DNA is stabiized in the filament's interior. The ATP-DnaA-oriC complex binds and stabilizes one strand of the AT-rich DNA unwinding element (DUE), permitting loading of DNA polymerase. After initiation quickly degrades to an ADP-DnaA complex that is not apt for DNA replication. Binds acidic phospholipids. The chain is Chromosomal replication initiator protein DnaA from Shewanella sp. (strain ANA-3).